Consider the following 156-residue polypeptide: Large ribosomal subunit protein eL24 (156 aa).

A compositionally biased stretch (basic and acidic residues) spans 110-123 (RAAKEKQKQKELEK). Residues 110–156 (RAAKEKQKQKELEKKAKKVEKKKPTLAPKQKAAKITQKPAPRVGGKR) form a disordered region.

Belongs to the eukaryotic ribosomal protein eL24 family.

The chain is Large ribosomal subunit protein eL24 (RPL24) from Schistosoma japonicum (Blood fluke).